A 427-amino-acid polypeptide reads, in one-letter code: Glutamate-1-semialdehyde 2,1-aminomutase (427 aa).

Lys-265 is subject to N6-(pyridoxal phosphate)lysine.

It belongs to the class-III pyridoxal-phosphate-dependent aminotransferase family. HemL subfamily. In terms of assembly, homodimer. It depends on pyridoxal 5'-phosphate as a cofactor.

It localises to the cytoplasm. It catalyses the reaction (S)-4-amino-5-oxopentanoate = 5-aminolevulinate. The protein operates within porphyrin-containing compound metabolism; protoporphyrin-IX biosynthesis; 5-aminolevulinate from L-glutamyl-tRNA(Glu): step 2/2. This Pseudomonas entomophila (strain L48) protein is Glutamate-1-semialdehyde 2,1-aminomutase.